A 333-amino-acid chain; its full sequence is Fructose-1,6-bisphosphatase class 1 (333 aa).

E89, D112, L114, and D115 together coordinate Mg(2+). Substrate is bound by residues 115-118 (DGSS), N208, Y241, and K271. E277 contributes to the Mg(2+) binding site.

This sequence belongs to the FBPase class 1 family. Homotetramer. Mg(2+) is required as a cofactor.

Its subcellular location is the cytoplasm. It catalyses the reaction beta-D-fructose 1,6-bisphosphate + H2O = beta-D-fructose 6-phosphate + phosphate. It functions in the pathway carbohydrate biosynthesis; gluconeogenesis. The polypeptide is Fructose-1,6-bisphosphatase class 1 (Haemophilus influenzae (strain ATCC 51907 / DSM 11121 / KW20 / Rd)).